Here is a 446-residue protein sequence, read N- to C-terminus: Phosphoglucosamine mutase (446 aa).

Residue Ser-104 is the Phosphoserine intermediate of the active site. Mg(2+)-binding residues include Ser-104, Asp-241, Asp-243, and Asp-245. A Phosphoserine modification is found at Ser-104.

The protein belongs to the phosphohexose mutase family. The cofactor is Mg(2+). Post-translationally, activated by phosphorylation.

The enzyme catalyses alpha-D-glucosamine 1-phosphate = D-glucosamine 6-phosphate. Functionally, catalyzes the conversion of glucosamine-6-phosphate to glucosamine-1-phosphate. The polypeptide is Phosphoglucosamine mutase (Teredinibacter turnerae (strain ATCC 39867 / T7901)).